The following is a 195-amino-acid chain: Imidazoleglycerol-phosphate dehydratase (195 aa).

This sequence belongs to the imidazoleglycerol-phosphate dehydratase family.

Its subcellular location is the cytoplasm. The enzyme catalyses D-erythro-1-(imidazol-4-yl)glycerol 3-phosphate = 3-(imidazol-4-yl)-2-oxopropyl phosphate + H2O. The protein operates within amino-acid biosynthesis; L-histidine biosynthesis; L-histidine from 5-phospho-alpha-D-ribose 1-diphosphate: step 6/9. The chain is Imidazoleglycerol-phosphate dehydratase from Nitrosomonas eutropha (strain DSM 101675 / C91 / Nm57).